A 188-amino-acid polypeptide reads, in one-letter code: NADH-quinone oxidoreductase subunit I (188 aa).

4Fe-4S ferredoxin-type domains lie at 44 to 74 (LNRY…VEGA) and 90 to 119 (RVYQ…MTNE). [4Fe-4S] cluster is bound by residues Cys-54, Cys-57, Cys-60, Cys-64, Cys-99, Cys-102, Cys-105, and Cys-109. Residues 144–188 (GMVDSPHPMAPGTTAEDYYRGTVTGGAAPASQDEPEADDTAGDRP) are disordered. Acidic residues predominate over residues 176–188 (DEPEADDTAGDRP).

Belongs to the complex I 23 kDa subunit family. NDH-1 is composed of 14 different subunits. Subunits NuoA, H, J, K, L, M, N constitute the membrane sector of the complex. The cofactor is [4Fe-4S] cluster.

The protein localises to the cell membrane. The enzyme catalyses a quinone + NADH + 5 H(+)(in) = a quinol + NAD(+) + 4 H(+)(out). NDH-1 shuttles electrons from NADH, via FMN and iron-sulfur (Fe-S) centers, to quinones in the respiratory chain. The immediate electron acceptor for the enzyme in this species is believed to be ubiquinone. Couples the redox reaction to proton translocation (for every two electrons transferred, four hydrogen ions are translocated across the cytoplasmic membrane), and thus conserves the redox energy in a proton gradient. The polypeptide is NADH-quinone oxidoreductase subunit I (Rhodococcus opacus (strain B4)).